Here is a 415-residue protein sequence, read N- to C-terminus: tRNA(Ile2) 2-agmatinylcytidine synthetase TiaS (415 aa).

This sequence belongs to the TiaS family.

It localises to the cytoplasm. It carries out the reaction cytidine(34) in tRNA(Ile2) + agmatine + ATP + H2O = 2-agmatinylcytidine(34) in tRNA(Ile2) + AMP + 2 phosphate + 2 H(+). ATP-dependent agmatine transferase that catalyzes the formation of 2-agmatinylcytidine (agm2C) at the wobble position (C34) of tRNA(Ile2), converting the codon specificity from AUG to AUA. The protein is tRNA(Ile2) 2-agmatinylcytidine synthetase TiaS of Methanocorpusculum labreanum (strain ATCC 43576 / DSM 4855 / Z).